A 243-amino-acid chain; its full sequence is UPF0758 protein PCC7424_2073 (243 aa).

Positions 112–235 constitute an MPN domain; it reads VEINDPVSAV…HQSLRTVTDL (124 aa). Residues H184, H186, and D197 each contribute to the Zn(2+) site. Residues 184–197 carry the JAMM motif motif; that stretch reads HNHPSGNVAPSQED.

The protein belongs to the UPF0758 family.

The chain is UPF0758 protein PCC7424_2073 from Gloeothece citriformis (strain PCC 7424) (Cyanothece sp. (strain PCC 7424)).